We begin with the raw amino-acid sequence, 1070 residues long: DNA-directed RNA polymerase subunit beta (1070 aa).

Belongs to the RNA polymerase beta chain family. In terms of assembly, in plastids the minimal PEP RNA polymerase catalytic core is composed of four subunits: alpha, beta, beta', and beta''. When a (nuclear-encoded) sigma factor is associated with the core the holoenzyme is formed, which can initiate transcription.

The protein localises to the plastid. It localises to the chloroplast. The catalysed reaction is RNA(n) + a ribonucleoside 5'-triphosphate = RNA(n+1) + diphosphate. DNA-dependent RNA polymerase catalyzes the transcription of DNA into RNA using the four ribonucleoside triphosphates as substrates. The chain is DNA-directed RNA polymerase subunit beta from Populus trichocarpa (Western balsam poplar).